A 611-amino-acid polypeptide reads, in one-letter code: Procollagen galactosyltransferase 1-B (611 aa).

Residues 1–24 (MSQAGVERLLKGLQILVLVLRLSA) form the signal peptide. N-linked (GlcNAc...) asparagine glycans are attached at residues asparagine 85, asparagine 173, asparagine 370, asparagine 373, and asparagine 568. Residues 576-591 (DRAKSRKTHQQEKLRS) show a composition bias toward basic and acidic residues. The disordered stretch occupies residues 576–611 (DRAKSRKTHQQEKLRSEALNTPSMGSPFDNTARDEL). Positions 608–611 (RDEL) match the Prevents secretion from ER motif.

This sequence belongs to the glycosyltransferase 25 family.

The protein localises to the endoplasmic reticulum lumen. The catalysed reaction is (5R)-5-hydroxy-L-lysyl-[collagen] + UDP-alpha-D-galactose = (5R)-5-O-(beta-D-galactosyl)-5-hydroxy-L-lysyl-[collagen] + UDP + H(+). Beta-galactosyltransferase that transfers beta-galactose to hydroxylysine residues of type I collagen. By acting on collagen glycosylation, facilitates the formation of collagen triple helix. The sequence is that of Procollagen galactosyltransferase 1-B (colgalt1-b) from Xenopus laevis (African clawed frog).